The following is a 431-amino-acid chain: Serine--tRNA ligase (431 aa).

An L-serine-binding site is contributed by 237–239; the sequence is TAE. 268–270 lines the ATP pocket; that stretch reads RSE. Glu-291 serves as a coordination point for L-serine. 355–358 provides a ligand contact to ATP; that stretch reads EISS. Ser-390 is an L-serine binding site.

It belongs to the class-II aminoacyl-tRNA synthetase family. Type-1 seryl-tRNA synthetase subfamily. As to quaternary structure, homodimer. The tRNA molecule binds across the dimer.

The protein resides in the cytoplasm. It carries out the reaction tRNA(Ser) + L-serine + ATP = L-seryl-tRNA(Ser) + AMP + diphosphate + H(+). The catalysed reaction is tRNA(Sec) + L-serine + ATP = L-seryl-tRNA(Sec) + AMP + diphosphate + H(+). The protein operates within aminoacyl-tRNA biosynthesis; selenocysteinyl-tRNA(Sec) biosynthesis; L-seryl-tRNA(Sec) from L-serine and tRNA(Sec): step 1/1. Functionally, catalyzes the attachment of serine to tRNA(Ser). Is also able to aminoacylate tRNA(Sec) with serine, to form the misacylated tRNA L-seryl-tRNA(Sec), which will be further converted into selenocysteinyl-tRNA(Sec). In Neisseria gonorrhoeae (strain ATCC 700825 / FA 1090), this protein is Serine--tRNA ligase.